Consider the following 83-residue polypeptide: uncharacterized protein (83 aa).

A run of 3 helical transmembrane segments spans residues 4–24 (AILSNYLYYPSILAFLFGVLM), 32–52 (IGNIFGYLILTVVIAYFLKAF), and 54–74 (YYDLLPLSCSYLSAVIGIIIG).

The protein localises to the cell membrane. This is an uncharacterized protein from Methanocaldococcus jannaschii (strain ATCC 43067 / DSM 2661 / JAL-1 / JCM 10045 / NBRC 100440) (Methanococcus jannaschii).